Here is a 46-residue protein sequence, read N- to C-terminus: uncharacterized protein (46 aa).

This is an uncharacterized protein from Escherichia coli (strain K12).